We begin with the raw amino-acid sequence, 557 residues long: Dihydroxy-acid dehydratase (557 aa).

D78 contacts Mg(2+). C119 is a [2Fe-2S] cluster binding site. Mg(2+) contacts are provided by D120 and K121. At K121 the chain carries N6-carboxylysine. Residue C192 coordinates [2Fe-2S] cluster. E446 provides a ligand contact to Mg(2+). S472 acts as the Proton acceptor in catalysis.

Belongs to the IlvD/Edd family. In terms of assembly, homodimer. [2Fe-2S] cluster is required as a cofactor. Requires Mg(2+) as cofactor.

The catalysed reaction is (2R)-2,3-dihydroxy-3-methylbutanoate = 3-methyl-2-oxobutanoate + H2O. It carries out the reaction (2R,3R)-2,3-dihydroxy-3-methylpentanoate = (S)-3-methyl-2-oxopentanoate + H2O. The protein operates within amino-acid biosynthesis; L-isoleucine biosynthesis; L-isoleucine from 2-oxobutanoate: step 3/4. Its pathway is amino-acid biosynthesis; L-valine biosynthesis; L-valine from pyruvate: step 3/4. Functions in the biosynthesis of branched-chain amino acids. Catalyzes the dehydration of (2R,3R)-2,3-dihydroxy-3-methylpentanoate (2,3-dihydroxy-3-methylvalerate) into 2-oxo-3-methylpentanoate (2-oxo-3-methylvalerate) and of (2R)-2,3-dihydroxy-3-methylbutanoate (2,3-dihydroxyisovalerate) into 2-oxo-3-methylbutanoate (2-oxoisovalerate), the penultimate precursor to L-isoleucine and L-valine, respectively. The chain is Dihydroxy-acid dehydratase from Campylobacter curvus (strain 525.92).